We begin with the raw amino-acid sequence, 249 residues long: 1-(5-phosphoribosyl)-5-[(5-phosphoribosylamino)methylideneamino] imidazole-4-carboxamide isomerase (249 aa).

Catalysis depends on Asp-8, which acts as the Proton acceptor. Catalysis depends on Asp-131, which acts as the Proton donor.

Belongs to the HisA/HisF family.

The protein localises to the cytoplasm. The enzyme catalyses 1-(5-phospho-beta-D-ribosyl)-5-[(5-phospho-beta-D-ribosylamino)methylideneamino]imidazole-4-carboxamide = 5-[(5-phospho-1-deoxy-D-ribulos-1-ylimino)methylamino]-1-(5-phospho-beta-D-ribosyl)imidazole-4-carboxamide. Its pathway is amino-acid biosynthesis; L-histidine biosynthesis; L-histidine from 5-phospho-alpha-D-ribose 1-diphosphate: step 4/9. This is 1-(5-phosphoribosyl)-5-[(5-phosphoribosylamino)methylideneamino] imidazole-4-carboxamide isomerase from Leptothrix cholodnii (strain ATCC 51168 / LMG 8142 / SP-6) (Leptothrix discophora (strain SP-6)).